Reading from the N-terminus, the 180-residue chain is Flavodoxin B (180 aa).

The region spanning 4–173 (IGLFFGSNTG…RVAAWLAQIA (170 aa)) is the Flavodoxin-like domain.

The protein belongs to the flavodoxin family. Requires FMN as cofactor.

In terms of biological role, low-potential electron donor to a number of redox enzymes. NifF is the electron donor to nitrogenase. The chain is Flavodoxin B (nifF) from Azotobacter chroococcum mcd 1.